The following is a 106-amino-acid chain: Cell division topological specificity factor (106 aa).

The protein belongs to the MinE family.

Prevents the cell division inhibition by proteins MinC and MinD at internal division sites while permitting inhibition at polar sites. This ensures cell division at the proper site by restricting the formation of a division septum at the midpoint of the long axis of the cell. The protein is Cell division topological specificity factor of Prochlorococcus marinus subsp. pastoris (strain CCMP1986 / NIES-2087 / MED4).